A 128-amino-acid chain; its full sequence is Glycine cleavage system H protein (128 aa).

The region spanning 22-104 (TVLVGITDYA…YGEGWIFRLK (83 aa)) is the Lipoyl-binding domain. Residue lysine 63 is modified to N6-lipoyllysine.

It belongs to the GcvH family. In terms of assembly, the glycine cleavage system is composed of four proteins: P, T, L and H. Monomer. (R)-lipoate is required as a cofactor.

In terms of biological role, the glycine cleavage system catalyzes the degradation of glycine. The H protein shuttles the methylamine group of glycine from the P protein to the T protein. This Thermus thermophilus (strain ATCC 27634 / DSM 579 / HB8) protein is Glycine cleavage system H protein.